The primary structure comprises 210 residues: Quaternary-amine-specific corrinoid protein (210 aa).

Residues 1–90 (MADWKNLTQA…VLGSGDTAVA (90 aa)) form the B12-binding N-terminal domain. The region spanning 90–210 (AGTILIGTAH…GVKICQAWVG (121 aa)) is the B12-binding domain. His-103 is a methylcob(III)alamin binding site.

It belongs to the methylamine corrinoid protein family. The proline betaine:THF methyl transfer system is composed of two methyltransferases, MtpB and MtqA, and the corrinoid protein MtqC. The L-carnitine:THF methyl transfer system is composed of two methyltransferases, MtcB and MtqA, and the corrinoid protein MtqC.

Functionally, involved in the degradation of the quaternary amines L-proline betaine and L-carnitine. Component of a corrinoid-dependent methyltransferase system that transfers a methyl group from L-proline betaine or L-carnitine to tetrahydrofolate (THF), forming methyl-THF, a key intermediate in the Wood-Ljungdahl acetogenesis pathway. Acts as a methyl group carrier between MtpB or MtcB, and MtqA. A methyl group from L-proline betaine or L-carnitine is first transferred to the corrinoid prosthetic group of MtqC by MtpB or MtcB, respectively, and then transferred from MtqC to THF by MtqA. In Eubacterium limosum, this protein is Quaternary-amine-specific corrinoid protein.